Consider the following 552-residue polypeptide: Cholesterol oxidase (552 aa).

Residues 1-45 constitute a signal peptide (tat-type signal); the sequence is MTDSRANRADATRGVASVSRRRFLAGAGLTAGAIALSSMSTSASA. FAD is bound by residues tyrosine 66, glycine 67, glutamate 86, glycine 160, asparagine 164, glycine 165, methionine 167, and valine 295. Residues glutamate 406 and histidine 492 each act as proton acceptor in the active site. FAD contacts are provided by glycine 520 and phenylalanine 532.

Belongs to the GMC oxidoreductase family. FAD is required as a cofactor. In terms of processing, predicted to be exported by the Tat system. The position of the signal peptide cleavage has been experimentally proven.

It localises to the secreted. The catalysed reaction is cholesterol + O2 = cholest-5-en-3-one + H2O2. The enzyme catalyses cholest-5-en-3-one = cholest-4-en-3-one. The protein operates within steroid metabolism; cholesterol degradation. Bifunctional enzyme that catalyzes the oxidation and isomerization of cholesterol to cholestenone (cholest-4-en-3-one), an initial step in the cholesterol degradation process. This is Cholesterol oxidase from Brevibacterium sterolicum.